The following is a 463-amino-acid chain: A-type ATP synthase subunit B (463 aa).

It belongs to the ATPase alpha/beta chains family. Has multiple subunits with at least A(3), B(3), C, D, E, F, H, I and proteolipid K(x).

The protein localises to the cell membrane. In terms of biological role, component of the A-type ATP synthase that produces ATP from ADP in the presence of a proton gradient across the membrane. The B chain is a regulatory subunit. The sequence is that of A-type ATP synthase subunit B from Thermococcus gammatolerans (strain DSM 15229 / JCM 11827 / EJ3).